A 446-amino-acid polypeptide reads, in one-letter code: Ribosomal protein uS12 methylthiotransferase RimO (446 aa).

The MTTase N-terminal domain maps to 6–116 (PNIGFISLGC…VMQQVHKYVP (111 aa)). Cysteine 15, cysteine 51, cysteine 80, cysteine 148, cysteine 152, and cysteine 155 together coordinate [4Fe-4S] cluster. The region spanning 134 to 375 (LTPKHYAYLK…MQLQQEISAA (242 aa)) is the Radical SAM core domain. The TRAM domain maps to 378 to 446 (QQKVGKVFTV…AYDLYASLIN (69 aa)).

It belongs to the methylthiotransferase family. RimO subfamily. It depends on [4Fe-4S] cluster as a cofactor.

The protein localises to the cytoplasm. It catalyses the reaction L-aspartate(89)-[ribosomal protein uS12]-hydrogen + (sulfur carrier)-SH + AH2 + 2 S-adenosyl-L-methionine = 3-methylsulfanyl-L-aspartate(89)-[ribosomal protein uS12]-hydrogen + (sulfur carrier)-H + 5'-deoxyadenosine + L-methionine + A + S-adenosyl-L-homocysteine + 2 H(+). Functionally, catalyzes the methylthiolation of an aspartic acid residue of ribosomal protein uS12. The chain is Ribosomal protein uS12 methylthiotransferase RimO from Pasteurella multocida (strain Pm70).